A 179-amino-acid polypeptide reads, in one-letter code: Large ribosomal subunit protein uL6 (179 aa).

The protein belongs to the universal ribosomal protein uL6 family. As to quaternary structure, part of the 50S ribosomal subunit.

This protein binds to the 23S rRNA, and is important in its secondary structure. It is located near the subunit interface in the base of the L7/L12 stalk, and near the tRNA binding site of the peptidyltransferase center. The chain is Large ribosomal subunit protein uL6 from Mycobacterium leprae (strain Br4923).